Here is a 71-residue protein sequence, read N- to C-terminus: Brevinin-1E (71 aa).

Positions 1 to 22 (MFTLKKSMLLLFFLGTINLSLC) are cleaved as a signal peptide. Residues 23–45 (EEERDADEEERRDNPDESEVEVE) constitute a propeptide that is removed on maturation. Cysteines 65 and 71 form a disulfide.

The protein belongs to the frog skin active peptide (FSAP) family. Brevinin subfamily. In terms of tissue distribution, expressed by the skin glands.

It localises to the secreted. Shows antibacterial activity against representative Gram-negative and Gram-positive bacterial species, and a very high hemolytic activity. The sequence is that of Brevinin-1E from Pelophylax lessonae (Pool frog).